We begin with the raw amino-acid sequence, 308 residues long: Ornithine carbamoyltransferase (308 aa).

Carbamoyl phosphate is bound by residues Arg103 and 130–133 (HPAQ). L-ornithine contacts are provided by residues Asn162, Asp221, and 225 to 226 (SM). Residues 261–262 (CL) and Arg289 each bind carbamoyl phosphate.

Belongs to the aspartate/ornithine carbamoyltransferase superfamily. OTCase family.

The protein localises to the cytoplasm. It carries out the reaction carbamoyl phosphate + L-ornithine = L-citrulline + phosphate + H(+). Its pathway is amino-acid biosynthesis; L-arginine biosynthesis; L-arginine from L-ornithine and carbamoyl phosphate: step 1/3. Reversibly catalyzes the transfer of the carbamoyl group from carbamoyl phosphate (CP) to the N(epsilon) atom of ornithine (ORN) to produce L-citrulline. This chain is Ornithine carbamoyltransferase, found in Deinococcus radiodurans (strain ATCC 13939 / DSM 20539 / JCM 16871 / CCUG 27074 / LMG 4051 / NBRC 15346 / NCIMB 9279 / VKM B-1422 / R1).